The primary structure comprises 71 residues: uncharacterized protein (71 aa).

The span at 1–10 (MHRKKRKKEK) shows a compositional bias: basic residues. The segment at 1–20 (MHRKKRKKEKKRTEKDNTTN) is disordered. The helical transmembrane segment at 21–43 (LPPLFLFPCSLSLPTLLAPVHYI) threads the bilayer.

Its subcellular location is the membrane. This is an uncharacterized protein from Saccharomyces cerevisiae (strain ATCC 204508 / S288c) (Baker's yeast).